A 380-amino-acid polypeptide reads, in one-letter code: Tryptophan--tRNA ligase 2 (380 aa).

The 'HIGH' region signature appears at 74–82 (PSGPMHLGH). A 'KMSKS' region motif is present at residues 249–253 (KMSSS).

It belongs to the class-I aminoacyl-tRNA synthetase family.

It localises to the cytoplasm. The catalysed reaction is tRNA(Trp) + L-tryptophan + ATP = L-tryptophyl-tRNA(Trp) + AMP + diphosphate + H(+). In Halobacterium salinarum (strain ATCC 700922 / JCM 11081 / NRC-1) (Halobacterium halobium), this protein is Tryptophan--tRNA ligase 2.